The sequence spans 274 residues: 4-deoxy-L-threo-5-hexosulose-uronate ketol-isomerase (274 aa).

Positions 192, 194, 199, and 241 each coordinate Zn(2+).

This sequence belongs to the KduI family. Requires Zn(2+) as cofactor.

The catalysed reaction is 5-dehydro-4-deoxy-D-glucuronate = 3-deoxy-D-glycero-2,5-hexodiulosonate. It functions in the pathway glycan metabolism; pectin degradation; 2-dehydro-3-deoxy-D-gluconate from pectin: step 4/5. Functionally, catalyzes the isomerization of 5-dehydro-4-deoxy-D-glucuronate to 3-deoxy-D-glycero-2,5-hexodiulosonate. The protein is 4-deoxy-L-threo-5-hexosulose-uronate ketol-isomerase of Shigella boydii serotype 18 (strain CDC 3083-94 / BS512).